Here is a 190-residue protein sequence, read N- to C-terminus: dITP/XTP pyrophosphatase (190 aa).

7-12 (SNNKNK) is a substrate binding site. Residue D68 is the Proton acceptor of the active site. D68 provides a ligand contact to Mg(2+). Residues T69, 148–151 (FGYD), K171, and 176–177 (HR) contribute to the substrate site.

This sequence belongs to the HAM1 NTPase family. In terms of assembly, homodimer. Mg(2+) is required as a cofactor.

The catalysed reaction is XTP + H2O = XMP + diphosphate + H(+). It catalyses the reaction dITP + H2O = dIMP + diphosphate + H(+). It carries out the reaction ITP + H2O = IMP + diphosphate + H(+). Its function is as follows. Pyrophosphatase that catalyzes the hydrolysis of nucleoside triphosphates to their monophosphate derivatives, with a high preference for the non-canonical purine nucleotides XTP (xanthosine triphosphate), dITP (deoxyinosine triphosphate) and ITP. Seems to function as a house-cleaning enzyme that removes non-canonical purine nucleotides from the nucleotide pool, thus preventing their incorporation into DNA/RNA and avoiding chromosomal lesions. The polypeptide is dITP/XTP pyrophosphatase (Flavobacterium psychrophilum (strain ATCC 49511 / DSM 21280 / CIP 103535 / JIP02/86)).